We begin with the raw amino-acid sequence, 275 residues long: Interleukin-2 receptor subunit alpha (275 aa).

Residues 1–21 (MEPSLLLWGILTFVVVHGHVT) form the signal peptide. Residues 22 to 84 (ELCDENPPDI…SWENQCRCIS (63 aa)) form the Sushi 1 domain. The Extracellular segment spans residues 22–243 (ELCDENPPDI…ESFVFTTEYQ (222 aa)). 3 cysteine pairs are disulfide-bonded: cysteine 24–cysteine 67, cysteine 49–cysteine 80, and cysteine 51–cysteine 82. 2 N-linked (GlcNAc...) asparagine glycosylation sites follow: asparagine 60 and asparagine 70. Residues 91–118 (DGQIIPKPEEQKGKSPMGMQSQMQPTDQ) are disordered. The segment covering 108 to 118 (GMQSQMQPTDQ) has biased composition (polar residues). The Sushi 2 domain maps to 123–186 (GHCREPPPWE…WTQPRLQCLS (64 aa)). Cystine bridges form between cysteine 125–cysteine 168 and cysteine 152–cysteine 184. The segment at 188–213 (RSDGWFPDDEEPQASTDAALGSDTSC) is disordered. Residues 244–262 (IAVAGCVLLLISIVLLSGL) traverse the membrane as a helical segment. Topologically, residues 263–275 (TWQRRWRKSRRTI) are cytoplasmic.

Non-covalent dimer of an alpha and a beta subunit. IL2R exists in 3 different forms: a high affinity dimer, an intermediate affinity monomer (beta subunit), and a low affinity monomer (alpha subunit). The high and intermediate affinity forms also associate with a gamma subunit.

The protein resides in the membrane. Functionally, receptor for interleukin-2. The receptor is involved in the regulation of immune tolerance by controlling regulatory T cells (TREGs) activity. TREGs suppress the activation and expansion of autoreactive T-cells. In Felis catus (Cat), this protein is Interleukin-2 receptor subunit alpha (IL2RA).